The following is a 464-amino-acid chain: MLEKNKGKIIQILGPVVDVRFTTGKLPKLLNALRVELPTKEVFTFEVAQHIGDDTVRCISMVSTNGLRRGLTVEDTGKAIMVPVGKQVLGRMFDVLGNPIDELPLEEGGEKSSIHGPIPTYEQQKTTSEILETGIKVIDLLIPYAKGGKIGLFGGAGVGKTVLVQELINNIATQHNGLSVFTGVGERTREGNDLYYEMKAAGVLDKTALVFGQMNEPPGARMRVALTGLTMAEYFRDKQNQDVLLFIDNIFRFTQAGSEVSALLGRIPSAVGYQPTLATEMGALQERITSTRSGSITSVQAVYVPADDLTDPAPATTFSHLDAKTVLDRNVAALGIYPAIDPLESSSRLLDPLVVGQEHYKVAQDVINILQRFKELQDIIAILGMGELSEEDKKIVARARKIRNFLSQPFTVAEKFSGIKGSYVKLSDTIRSFKEILNGNLDDYPEDIFRYAGSIDDVIARYKK.

154–161 is a binding site for ATP; that stretch reads GGAGVGKT.

The protein belongs to the ATPase alpha/beta chains family. In terms of assembly, F-type ATPases have 2 components, CF(1) - the catalytic core - and CF(0) - the membrane proton channel. CF(1) has five subunits: alpha(3), beta(3), gamma(1), delta(1), epsilon(1). CF(0) has three main subunits: a(1), b(2) and c(9-12). The alpha and beta chains form an alternating ring which encloses part of the gamma chain. CF(1) is attached to CF(0) by a central stalk formed by the gamma and epsilon chains, while a peripheral stalk is formed by the delta and b chains.

It localises to the cell membrane. It carries out the reaction ATP + H2O + 4 H(+)(in) = ADP + phosphate + 5 H(+)(out). Functionally, produces ATP from ADP in the presence of a proton gradient across the membrane. The catalytic sites are hosted primarily by the beta subunits. The chain is ATP synthase subunit beta from Mycoplasmopsis synoviae (strain 53) (Mycoplasma synoviae).